The chain runs to 503 residues: ATP synthase subunit alpha (503 aa).

Residue 169–176 (GDRKTGKT) coordinates ATP.

It belongs to the ATPase alpha/beta chains family. F-type ATPases have 2 components, CF(1) - the catalytic core - and CF(0) - the membrane proton channel. CF(1) has five subunits: alpha(3), beta(3), gamma(1), delta(1), epsilon(1). CF(0) has three main subunits: a(1), b(2) and c(9-12). The alpha and beta chains form an alternating ring which encloses part of the gamma chain. CF(1) is attached to CF(0) by a central stalk formed by the gamma and epsilon chains, while a peripheral stalk is formed by the delta and b chains.

The protein resides in the cell membrane. It catalyses the reaction ATP + H2O + 4 H(+)(in) = ADP + phosphate + 5 H(+)(out). Increases 2-fold following exposure to low pH. Functionally, produces ATP from ADP in the presence of a proton gradient across the membrane. The alpha chain is a regulatory subunit. The sequence is that of ATP synthase subunit alpha from Lactobacillus acidophilus (strain ATCC 700396 / NCK56 / N2 / NCFM).